The sequence spans 553 residues: MRNFPEIQNTAYDLIVIGGGINGVGTARDGALRGLKTLLIEKDDFASGTSSWSTRLIHGGLRYLEYFEFNLVRESLREREVLLHTAPHLVQPLQLTIPVYDWSSRAYWEIQAGMILYDILSFDKTLPSHRMLSPQQFQQLFRAAEKKGLKGGAQYFDGQVEYAERLDLEVTLSAQKAGAAMLNYVAVKGLEKGENNLITAIHCQDQLSGEKFTVNSAQAIVINTTGPWVDEVCGLAHRGGEPVAIVQERKIGGTKGSHIVVDPFPGAPASALYVEAFVDKRPYFIIPWLGKYLIGTTDHRYDGSLDRVKASDDEIDYLIAETNRVMPAAQLTRQDVRFTYSGVRPLPYTDGKKAGSITRNHILYDHSQDGVNNLISLIGGKLTTYRQVGEEMVDKVYGKLRRSAPPCPTLTQPLPGAEAYPLSLETAMDKYGNHLERHSIQHLFCLYGARAGDILALVHGAPELGERIIPSLPDIKAQVVFAVQAEMAHTLVDICRRRTAIAMVTNDYGFSALAGICQTLTDHCGWTQEQCDKQIQKYHEYMEQNCIPDYCLH.

An FAD-binding site is contributed by 13–41 (DLIVIGGGINGVGTARDGALRGLKTLLIE).

Belongs to the FAD-dependent glycerol-3-phosphate dehydrogenase family. The cofactor is FAD.

Its subcellular location is the cytoplasm. The enzyme catalyses a quinone + sn-glycerol 3-phosphate = dihydroxyacetone phosphate + a quinol. In Synechocystis sp. (strain ATCC 27184 / PCC 6803 / Kazusa), this protein is Glycerol-3-phosphate dehydrogenase (glpD).